Consider the following 202-residue polypeptide: MDVSKKISVIKKEIINEALDKKEQIISREKDKWEKEYEDFKQKLDNKEKEIIELYRQEARMKKEQIVSRAVLKKKTEKRQKMDEYLHQILKELEEKLHEYRNDTGYRDFLKRLVKDSLNVMESSHVIIKLNSHDLKIFNEIQDELRNEIDNIEIEVANNPLNISGGVIVEDRDGKEIVENTFETCLEEVKEDIAVELHSKVL.

Belongs to the V-ATPase E subunit family.

Produces ATP from ADP in the presence of a proton gradient across the membrane. The protein is V-type proton ATPase subunit E of Halothermothrix orenii (strain H 168 / OCM 544 / DSM 9562).